Consider the following 787-residue polypeptide: uncharacterized protein (787 aa).

At Met1 the chain carries N-acetylmethionine. Disordered regions lie at residues Met1 to Lys115, Thr130 to Glu200, and Val217 to Asp238. The segment covering Val36–Thr54 has biased composition (polar residues). Ser63 carries the phosphoserine modification. Polar residues predominate over residues Thr130 to His142. Over residues Ser160–Thr169 the composition is skewed to low complexity. The span at Thr170–Ser184 shows a compositional bias: basic and acidic residues. Over residues Ser218–Asn230 the composition is skewed to low complexity. Ser254, Ser313, Ser342, Ser345, Ser390, Ser477, Ser492, Ser546, Ser683, and Ser699 each carry phosphoserine.

The protein resides in the cytoplasm. This is an uncharacterized protein from Saccharomyces cerevisiae (strain ATCC 204508 / S288c) (Baker's yeast).